A 108-amino-acid polypeptide reads, in one-letter code: Putative septation protein SpoVG (108 aa).

It belongs to the SpoVG family.

Functionally, could be involved in septation. This Bdellovibrio bacteriovorus (strain ATCC 15356 / DSM 50701 / NCIMB 9529 / HD100) protein is Putative septation protein SpoVG.